We begin with the raw amino-acid sequence, 3214 residues long: Ciliogenesis and planar polarity effector 1 (3214 aa).

2 consecutive transmembrane segments (helical) span residues 593-613 and 632-652; these read KLML…LQFI and AWVL…YWDM. Disordered regions lie at residues 1496–1523, 1644–1667, 1879–1991, 2047–2142, 2214–2241, 2398–2440, 2491–2529, 2622–2650, 2824–2855, 3037–3127, and 3158–3181; these read VGKK…ETPG, GNQS…PLQS, DGRH…HRAQ, FGES…FPPA, SLSD…SSHC, GITQ…ISND, GSHD…GHEP, TFQS…QSGE, VSLQ…HSSQ, TAPA…CRED, and MSPA…VSES. Residues 1512 to 1523 are compositionally biased toward basic and acidic residues; it reads NSQRKEDDETPG. Residues 1932-1942 show a composition bias toward basic and acidic residues; it reads QCSRKEPRDAS. Polar residues-rich tracts occupy residues 1943-1953, 1971-1984, and 2047-2068; these read VDTNLTEQKGA, NGAQ…QKTQ, and FGES…SRQR. A compositionally biased stretch (basic and acidic residues) spans 2079 to 2099; it reads CTREPGKNSPADHKRISRPDQ. Residues 2215–2241 are compositionally biased toward polar residues; the sequence is LSDSCQPPVSQRTVHTTLPSPSDSSHC. Basic and acidic residues predominate over residues 2500 to 2514; the sequence is DPDKEGPSQKADSES. Polar residues-rich tracts occupy residues 2515–2524 and 2622–2634; these read SKNPQATAAS and TFQS…STRG. The segment covering 2830–2848 has biased composition (acidic residues); the sequence is EDVEEQKDAEETSETEFSE. Residues 3090-3107 show a composition bias toward polar residues; sequence RGSSQLRGSQPPCQSQKP.

Interacts with FUZ; INTU and WDPCP; the interactors are proposed to form the core CPLANE (ciliogenesis and planar polarity effectors) complex.

The protein localises to the membrane. It localises to the cell projection. It is found in the cilium. Its function is as follows. Involved in ciliogenesis. Involved in the establishment of cell polarity required for directional cell migration. Proposed to act in association with the CPLANE (ciliogenesis and planar polarity effectors) complex. Involved in recruitment of peripheral IFT-A proteins to basal bodies. This Mus musculus (Mouse) protein is Ciliogenesis and planar polarity effector 1.